We begin with the raw amino-acid sequence, 738 residues long: Elongation factor G, mitochondrial (738 aa).

The disordered stretch occupies residues 1-20 (MCIGPAPTPETEEELPPSPQ). The region spanning 32–320 (RFQRNIGVSA…GVCAYLPNPA (289 aa)) is the tr-type G domain. GTP contacts are provided by residues 41-48 (AHIDSGKT), 118-122 (DTPGH), and 172-175 (NKMD).

It belongs to the TRAFAC class translation factor GTPase superfamily. Classic translation factor GTPase family. EF-G/EF-2 subfamily.

It is found in the mitochondrion. Its pathway is protein biosynthesis; polypeptide chain elongation. Its function is as follows. Mitochondrial GTPase that catalyzes the GTP-dependent ribosomal translocation step during translation elongation. During this step, the ribosome changes from the pre-translocational (PRE) to the post-translocational (POST) state as the newly formed A-site-bound peptidyl-tRNA and P-site-bound deacylated tRNA move to the P and E sites, respectively. Catalyzes the coordinated movement of the two tRNA molecules, the mRNA and conformational changes in the ribosome. The polypeptide is Elongation factor G, mitochondrial (Laccaria bicolor (strain S238N-H82 / ATCC MYA-4686) (Bicoloured deceiver)).